Reading from the N-terminus, the 171-residue chain is UPF0398 protein SEQ_1788 (171 aa).

It belongs to the UPF0398 family.

The sequence is that of UPF0398 protein SEQ_1788 from Streptococcus equi subsp. equi (strain 4047).